Reading from the N-terminus, the 204-residue chain is Synaptosomal-associated protein 25-A (204 aa).

The segment covering 1–11 has biased composition (basic and acidic residues); it reads MAEDADMRNEL. The interval 1–25 is disordered; that stretch reads MAEDADMRNELSDMQQRADQLADES. T-SNARE coiled-coil homology domains are found at residues 19–81 and 138–200; these read DQLA…LNDL and DARE…ATKM.

The protein belongs to the SNAP-25 family.

The protein resides in the synapse. The protein localises to the synaptosome. It localises to the cell membrane. May play an important role in the synaptic function of specific neuronal systems. Associates with proteins involved in vesicle docking and membrane fusion. The sequence is that of Synaptosomal-associated protein 25-A (snap25a) from Carassius auratus (Goldfish).